The chain runs to 89 residues: Small ribosomal subunit protein bS16c (89 aa).

This sequence belongs to the bacterial ribosomal protein bS16 family.

The protein localises to the plastid. Its subcellular location is the chloroplast. The chain is Small ribosomal subunit protein bS16c from Drimys granadensis.